A 676-amino-acid chain; its full sequence is Serine/threonine-protein kinase Haspin homolog ALK2 (676 aa).

Residues 53–93 (HKGSAEDESQSFFTSSDSPTSKTRPVGKTIENDDYYGKRSS) form a disordered region. Residues 62-75 (QSFFTSSDSPTSKT) are compositionally biased toward polar residues. The KEN box motif lies at 116–118 (KEN). The D box motif lies at 150-158 (RTPLRPISN). The tract at residues 228-312 (SSRSVNDQDP…HKTSHSSLNK (85 aa)) is disordered. Polar residues predominate over residues 232–259 (VNDQDPNFVQPKPTNSLQKKSSISSFHN). Positions 383–672 (LCDVKYILHD…TCGDLLSLKG (290 aa)) constitute a Protein kinase domain. ATP-binding positions include 389 to 397 (ILHDLREAQ) and Lys-430.

This sequence belongs to the protein kinase superfamily. Ser/Thr protein kinase family. Haspin subfamily. Post-translationally, periodically phosphorylated during the cell cycle with a phosphorylation peak during mitosis and hyperphosphorylated after DNA damage.

The catalysed reaction is L-seryl-[protein] + ATP = O-phospho-L-seryl-[protein] + ADP + H(+). It catalyses the reaction L-threonyl-[protein] + ATP = O-phospho-L-threonyl-[protein] + ADP + H(+). Serine/threonine haspin-like protein kinase involved in cell cycle regulation. In Saccharomyces cerevisiae (strain ATCC 204508 / S288c) (Baker's yeast), this protein is Serine/threonine-protein kinase Haspin homolog ALK2 (ALK2).